Reading from the N-terminus, the 70-residue chain is Flexible pilin (70 aa).

The N-terminal stretch at 1-24 (MPNFFRNGCIALVGSVAAMGAAHA) is a signal peptide.

As to quaternary structure, homomer.

The protein localises to the fimbrium. In terms of biological role, fimbriae (also called pili) are polar filaments radiating from the surface of the bacterium to a length of 0.5-1.5 micrometers and numbering 100-300 per cell. They enable bacteria to colonize the epithelium of specific host organs. Flexible pili possess hemagglutinating function. This Aeromonas hydrophila protein is Flexible pilin (aerA).